Reading from the N-terminus, the 441-residue chain is Methylenetetrahydrofolate--tRNA-(uracil-5-)-methyltransferase TrmFO (441 aa).

10–15 (GAGLAG) is an FAD binding site.

The protein belongs to the MnmG family. TrmFO subfamily. The cofactor is FAD.

It is found in the cytoplasm. The catalysed reaction is uridine(54) in tRNA + (6R)-5,10-methylene-5,6,7,8-tetrahydrofolate + NADH + H(+) = 5-methyluridine(54) in tRNA + (6S)-5,6,7,8-tetrahydrofolate + NAD(+). The enzyme catalyses uridine(54) in tRNA + (6R)-5,10-methylene-5,6,7,8-tetrahydrofolate + NADPH + H(+) = 5-methyluridine(54) in tRNA + (6S)-5,6,7,8-tetrahydrofolate + NADP(+). Catalyzes the folate-dependent formation of 5-methyl-uridine at position 54 (M-5-U54) in all tRNAs. The chain is Methylenetetrahydrofolate--tRNA-(uracil-5-)-methyltransferase TrmFO from Desulforamulus reducens (strain ATCC BAA-1160 / DSM 100696 / MI-1) (Desulfotomaculum reducens).